Reading from the N-terminus, the 98-residue chain is METRKYEITYIIRPDIEESAKSELVDRFDKILADNGATIADSKDWSTRRFAYPIAKYTEGTYHVVNLTTDSDQALNEFDRLAKFSDDILRHMIVKLDA.

Belongs to the bacterial ribosomal protein bS6 family.

In terms of biological role, binds together with bS18 to 16S ribosomal RNA. This chain is Small ribosomal subunit protein bS6, found in Limosilactobacillus reuteri (strain DSM 20016) (Lactobacillus reuteri).